Reading from the N-terminus, the 515-residue chain is Signal transduction histidine-protein kinase/phosphatase MprB (515 aa).

The Cytoplasmic segment spans residues Met1–Arg24. A helical transmembrane segment spans residues Val25 to Tyr45. The Extracellular portion of the chain corresponds to Ala46 to Thr165. A helical transmembrane segment spans residues Val166–Ala186. The HAMP domain maps to Arg187–Glu239. At Arg187–Leu515 the chain is on the cytoplasmic side. The 221-residue stretch at Asp247–Pro467 folds into the Histidine kinase domain. Position 250 is a phosphohistidine; by autocatalysis (His250). The interval Leu468 to Leu515 is disordered.

Mg(2+) is required as a cofactor. It depends on Mn(2+) as a cofactor. In terms of processing, autophosphorylated.

It is found in the cell membrane. It carries out the reaction ATP + protein L-histidine = ADP + protein N-phospho-L-histidine.. Member of the two-component regulatory system MprB/MprA which contributes to maintaining a balance among several systems involved in stress resistance and is required for establishment and maintenance of persistent infection in the host. In response to environmental signals MprB acts both as a membrane-associated protein kinase that undergoes autophosphorylation and subsequently transfers the phosphate to MprA, and a protein phosphatase that dephosphorylates phospho-MprA. This chain is Signal transduction histidine-protein kinase/phosphatase MprB (mprB), found in Mycobacterium sp. (strain JLS).